The sequence spans 134 residues: Probable glycine cleavage system H protein (134 aa).

Residues 29–110 form the Lipoyl-binding domain; the sequence is TVLVGITDYA…PYGAWIAKIK (82 aa). Lys-70 carries the post-translational modification N6-lipoyllysine.

This sequence belongs to the GcvH family. The glycine cleavage system is composed of four proteins: P, T, L and H. Requires (R)-lipoate as cofactor.

The glycine cleavage system catalyzes the degradation of glycine. The H protein shuttles the methylamine group of glycine from the P protein to the T protein. This Pyrococcus abyssi (strain GE5 / Orsay) protein is Probable glycine cleavage system H protein.